We begin with the raw amino-acid sequence, 1391 residues long: DNA-directed RNA polymerase subunit beta' (1391 aa).

Zn(2+)-binding residues include Cys-72, Cys-74, Cys-87, and Cys-90. Residues Asp-462, Asp-464, and Asp-466 each coordinate Mg(2+). 4 residues coordinate Zn(2+): Cys-816, Cys-890, Cys-897, and Cys-900.

This sequence belongs to the RNA polymerase beta' chain family. As to quaternary structure, the RNAP catalytic core consists of 2 alpha, 1 beta, 1 beta' and 1 omega subunit. When a sigma factor is associated with the core the holoenzyme is formed, which can initiate transcription. The cofactor is Mg(2+). Zn(2+) is required as a cofactor.

The enzyme catalyses RNA(n) + a ribonucleoside 5'-triphosphate = RNA(n+1) + diphosphate. Its function is as follows. DNA-dependent RNA polymerase catalyzes the transcription of DNA into RNA using the four ribonucleoside triphosphates as substrates. The sequence is that of DNA-directed RNA polymerase subunit beta' from Neisseria meningitidis serogroup A / serotype 4A (strain DSM 15465 / Z2491).